A 1131-amino-acid polypeptide reads, in one-letter code: DNA polymerase II large subunit (1131 aa).

This sequence belongs to the archaeal DNA polymerase II family. As to quaternary structure, heterodimer of a large subunit and a small subunit.

The enzyme catalyses DNA(n) + a 2'-deoxyribonucleoside 5'-triphosphate = DNA(n+1) + diphosphate. It catalyses the reaction Exonucleolytic cleavage in the 3'- to 5'-direction to yield nucleoside 5'-phosphates.. In terms of biological role, possesses two activities: a DNA synthesis (polymerase) and an exonucleolytic activity that degrades single-stranded DNA in the 3'- to 5'-direction. Has a template-primer preference which is characteristic of a replicative DNA polymerase. The protein is DNA polymerase II large subunit of Methanococcus maripaludis (strain DSM 14266 / JCM 13030 / NBRC 101832 / S2 / LL).